We begin with the raw amino-acid sequence, 110 residues long: RNA polymerase II transcriptional coactivator (110 aa).

Positions 1–50 (MPKTKKKDSSSDSDSGPDDRIKPASKKAKESDAPNSDPKDSGENGATSWT) are disordered. The span at 17–42 (PDDRIKPASKKAKESDAPNSDPKDSG) shows a compositional bias: basic and acidic residues.

Belongs to the transcriptional coactivator PC4 family.

The protein localises to the nucleus. General coactivator that functions cooperatively with TAFs and mediates functional interactions between upstream activators and the general transcriptional machinery. Binds single-stranded DNA. Binds specifically to the NssBF element, a short nucleotide sequence of the 1731 retrotransposon, to repress promoter activity. The sequence is that of RNA polymerase II transcriptional coactivator (Ssb-c31a) from Drosophila melanogaster (Fruit fly).